The following is a 455-amino-acid chain: Glutamyl-tRNA reductase (455 aa).

Residues 49–52 (TCNR), serine 109, 114–116 (ETQ), and glutamine 120 contribute to the substrate site. Residue cysteine 50 is the Nucleophile of the active site. 189–194 (GAGKMG) provides a ligand contact to NADP(+).

Belongs to the glutamyl-tRNA reductase family. As to quaternary structure, homodimer.

The catalysed reaction is (S)-4-amino-5-oxopentanoate + tRNA(Glu) + NADP(+) = L-glutamyl-tRNA(Glu) + NADPH + H(+). It participates in porphyrin-containing compound metabolism; protoporphyrin-IX biosynthesis; 5-aminolevulinate from L-glutamyl-tRNA(Glu): step 1/2. Functionally, catalyzes the NADPH-dependent reduction of glutamyl-tRNA(Glu) to glutamate 1-semialdehyde (GSA). The polypeptide is Glutamyl-tRNA reductase (Bacillus velezensis (strain DSM 23117 / BGSC 10A6 / LMG 26770 / FZB42) (Bacillus amyloliquefaciens subsp. plantarum)).